Consider the following 1029-residue polypeptide: MPKRTDLQTILILGSGPIQIGQAAEFDYSGTQALKALKKEGYRVVLVNSNPATIMTDPDLADATYLEPLTPEFVRKVIEKERPDALLPTLGGQTALNLAMELNANGTLKEFGVELIGANAEAIHKGEDREAFQAAMKKIGVETARGKMVHSLEEAIEYQKEIGLPIVIRPSFTLGGTGGGIAHTYEDFLKITEGGLRDSPVHSVLLEESILGWKEYELEVMRDHADTVVIITSIENFDPMGVHTGDSITVAPAQTLSDVEYQRLRDYSLAIIREIGVDTGGSNIQFAVNPENGRVIVIEMNPRVSRSSALASKATGFPIAKIAALLAVGYHLDELPNDITRVTPAAFEPTIDYVVTKIPRFAFEKFPGTPDALGTQMRSVGEVMAIGRTFKESLQKALRSTESDVRGAFAEMSTEDLRGLLYGNPRRLEAVIELLRRGEGVPAVHDATKIDPWFLSQIQEIVDAEKELLNLGPITEWKYELWREVKRLGFSDARIGEIVGLPELEVRALRKAAKATPVYKTVDTCAAEFEAYTPYHYSTYEWEDEVTPTDKPKVVILGSGPNRIGQGVEFDYATVHAVWALQEAGYETIMINSNPETVSTDYDTADRLYFEPLTFEDVMNIVEHEKPVGVIVQLGGQTPLKLAKRLAEAGAPIIGTLPETIHQAEDRASFNALCERLGLPQPRGKVAQTPEQARELAAELGFPLMVRPSYVLGGRAMRTVRSMEELTTYLDEVYAAVEGQPSILLDQFLEGALELDVDTLCDGERAVVAGIMEHVEAAGVHSGDSACVLPPVTLSPELLERVKADTERLALELGVKGLLNVQWAVKDGVAYILEANPRASRTVPFVSKAVNHPLAKYAARIAVGQTLEQIGFTETPLPDLYAVKEVHLPFLKFKGVSPILGPEMKSTGESMGIDTDPYLAYYRAELGAKSNLPLSGTALLLGDGLDGVAATLESAGLRVIHEQEGDRLPDLLIDVTGSPLLRTALERGVPIVSTREGAEWTAKAIAAAQGKTLGVRSLQAWQQREAAAS.

The interval 1–402 (MPKRTDLQTI…SLQKALRSTE (402 aa)) is carboxyphosphate synthetic domain. ATP-binding residues include Arg-129, Arg-169, Gly-175, Gly-176, Glu-208, Ile-210, Glu-215, Gly-241, Val-242, His-243, Gln-285, and Glu-299. The 196-residue stretch at 133 to 328 (QAAMKKIGVE…IAKIAALLAV (196 aa)) folds into the ATP-grasp 1 domain. Mg(2+) is bound by residues Gln-285, Glu-299, and Asn-301. 3 residues coordinate Mn(2+): Gln-285, Glu-299, and Asn-301. Positions 403–546 (SDVRGAFAEM…YSTYEWEDEV (144 aa)) are oligomerization domain. The carbamoyl phosphate synthetic domain stretch occupies residues 547–929 (TPTDKPKVVI…AYYRAELGAK (383 aa)). In terms of domain architecture, ATP-grasp 2 spans 671–863 (NALCERLGLP…LAKYAARIAV (193 aa)). The ATP site is built by Arg-707, Gln-747, Leu-749, Glu-754, Gly-779, Val-780, His-781, Ser-782, Gln-822, and Glu-834. Positions 822, 834, and 836 each coordinate Mg(2+). Positions 822, 834, and 836 each coordinate Mn(2+). In terms of domain architecture, MGS-like spans 930 to 1028 (SNLPLSGTAL…QAWQQREAAA (99 aa)). An allosteric domain region spans residues 930-1029 (SNLPLSGTAL…AWQQREAAAS (100 aa)).

Belongs to the CarB family. In terms of assembly, composed of two chains; the small (or glutamine) chain promotes the hydrolysis of glutamine to ammonia, which is used by the large (or ammonia) chain to synthesize carbamoyl phosphate. Tetramer of heterodimers (alpha,beta)4. Mg(2+) serves as cofactor. The cofactor is Mn(2+).

The catalysed reaction is hydrogencarbonate + L-glutamine + 2 ATP + H2O = carbamoyl phosphate + L-glutamate + 2 ADP + phosphate + 2 H(+). It carries out the reaction hydrogencarbonate + NH4(+) + 2 ATP = carbamoyl phosphate + 2 ADP + phosphate + 2 H(+). It functions in the pathway amino-acid biosynthesis; L-arginine biosynthesis; carbamoyl phosphate from bicarbonate: step 1/1. Its pathway is pyrimidine metabolism; UMP biosynthesis via de novo pathway; (S)-dihydroorotate from bicarbonate: step 1/3. Large subunit of the glutamine-dependent carbamoyl phosphate synthetase (CPSase). CPSase catalyzes the formation of carbamoyl phosphate from the ammonia moiety of glutamine, carbonate, and phosphate donated by ATP, constituting the first step of 2 biosynthetic pathways, one leading to arginine and/or urea and the other to pyrimidine nucleotides. The large subunit (synthetase) binds the substrates ammonia (free or transferred from glutamine from the small subunit), hydrogencarbonate and ATP and carries out an ATP-coupled ligase reaction, activating hydrogencarbonate by forming carboxy phosphate which reacts with ammonia to form carbamoyl phosphate. The polypeptide is Carbamoyl phosphate synthase large chain (Deinococcus geothermalis (strain DSM 11300 / CIP 105573 / AG-3a)).